The sequence spans 188 residues: Archaemetzincin (188 aa).

Zn(2+) is bound at residue histidine 137. Glutamate 138 serves as the catalytic Proton acceptor. Zn(2+) contacts are provided by histidine 141, histidine 147, cysteine 148, cysteine 153, cysteine 172, and cysteine 175.

This sequence belongs to the peptidase M54 family. As to quaternary structure, monomer. Zn(2+) is required as a cofactor.

Probable zinc metalloprotease whose natural substrate is unknown. This Pyrococcus horikoshii (strain ATCC 700860 / DSM 12428 / JCM 9974 / NBRC 100139 / OT-3) protein is Archaemetzincin.